Consider the following 212-residue polypeptide: Protein-L-isoaspartate O-methyltransferase (212 aa).

Residue Ser-62 is part of the active site.

This sequence belongs to the methyltransferase superfamily. L-isoaspartyl/D-aspartyl protein methyltransferase family.

Its subcellular location is the cytoplasm. It catalyses the reaction [protein]-L-isoaspartate + S-adenosyl-L-methionine = [protein]-L-isoaspartate alpha-methyl ester + S-adenosyl-L-homocysteine. Functionally, catalyzes the methyl esterification of L-isoaspartyl residues in peptides and proteins that result from spontaneous decomposition of normal L-aspartyl and L-asparaginyl residues. It plays a role in the repair and/or degradation of damaged proteins. The chain is Protein-L-isoaspartate O-methyltransferase from Pseudoalteromonas translucida (strain TAC 125).